The following is a 249-amino-acid chain: MRPKLRIEDLHFWYGENHALQGISMDVQPNRVTALIGPSGCGKSTLLRCLNRMNELIQGTTLEGTILADGQDIYADDTDPVMVRRRIGMVFQKPNPFPKSIYKNVAWGAEINGYTGDLDALVERSLRQAALWDEVKDQLHSSALDLSGGQQQRLCIARTLAVQPDVVLMDEPASALDPIATSKIEETITELKKDYTIVIVTHNMQQASRISDETAFLYMGRLIEMSPTDQLFTRPEKDRTEAYVTGRFG.

The region spanning 5–244 (LRIEDLHFWY…PEKDRTEAYV (240 aa)) is the ABC transporter domain. 37 to 44 (GPSGCGKS) contacts ATP.

The protein belongs to the ABC transporter superfamily. Phosphate importer (TC 3.A.1.7) family. In terms of assembly, the complex is composed of two ATP-binding proteins (PstB), two transmembrane proteins (PstC and PstA) and a solute-binding protein (PstS).

It is found in the cell inner membrane. The catalysed reaction is phosphate(out) + ATP + H2O = ADP + 2 phosphate(in) + H(+). Functionally, part of the ABC transporter complex PstSACB involved in phosphate import. Responsible for energy coupling to the transport system. The chain is Phosphate import ATP-binding protein PstB from Salinibacter ruber (strain DSM 13855 / M31).